The chain runs to 102 residues: Scorpine-like-2 (102 aa).

An N-terminal signal peptide occupies residues 1 to 19 (MQTQCTVLQLLVLVALCSC). The region spanning 63–102 (QQLCLIVDTVQWCNKSCLAAENKEGYCHGTKCKCGIKVSY) is the BetaSPN-type CS-alpha/beta domain. Cystine bridges form between C66/C89, C75/C94, and C79/C96.

The protein belongs to the long chain scorpion toxin family. Class 3 subfamily. Expressed by the venom gland.

The protein resides in the secreted. In terms of biological role, inhibits voltage-gated potassium channels. The sequence is that of Scorpine-like-2 from Urodacus yaschenkoi (Inland robust scorpion).